The primary structure comprises 266 residues: Glucosamine-6-phosphate deaminase (266 aa).

The active-site Proton acceptor; for enolization step is the Asp72. Asp141 acts as the For ring-opening step in catalysis. His143 serves as the catalytic Proton acceptor; for ring-opening step. Glu148 functions as the For ring-opening step in the catalytic mechanism.

The protein belongs to the glucosamine/galactosamine-6-phosphate isomerase family. NagB subfamily. Homohexamer; trimer of disulfide-linked dimers.

The catalysed reaction is alpha-D-glucosamine 6-phosphate + H2O = beta-D-fructose 6-phosphate + NH4(+). It functions in the pathway amino-sugar metabolism; N-acetylneuraminate degradation; D-fructose 6-phosphate from N-acetylneuraminate: step 5/5. Its activity is regulated as follows. Allosterically activated by N-acetylglucosamine 6-phosphate (GlcNAc6P). Catalyzes the reversible isomerization-deamination of glucosamine 6-phosphate (GlcN6P) to form fructose 6-phosphate (Fru6P) and ammonium ion. The chain is Glucosamine-6-phosphate deaminase from Vibrio parahaemolyticus serotype O3:K6 (strain RIMD 2210633).